Reading from the N-terminus, the 167-residue chain is G/U mismatch-specific DNA glycosylase (167 aa).

Belongs to the uracil-DNA glycosylase (UDG) superfamily. TDG/mug family. As to quaternary structure, binds DNA as a monomer.

It localises to the cytoplasm. The catalysed reaction is Specifically hydrolyzes mismatched double-stranded DNA and polynucleotides, releasing free uracil.. Excises ethenocytosine and uracil, which can arise by alkylation or deamination of cytosine, respectively, from the corresponding mispairs with guanine in ds-DNA. It is capable of hydrolyzing the carbon-nitrogen bond between the sugar-phosphate backbone of the DNA and the mispaired base. The complementary strand guanine functions in substrate recognition. Required for DNA damage lesion repair in stationary-phase cells. In Pectobacterium carotovorum subsp. carotovorum (strain PC1), this protein is G/U mismatch-specific DNA glycosylase.